The sequence spans 102 residues: UPF0213 protein in potE 3'region (102 aa).

Positions 6 to 81 (SPWHLYMLRL…KQLSKTQKER (76 aa)) constitute a GIY-YIG domain.

It belongs to the UPF0213 family.

The protein is UPF0213 protein in potE 3'region of Serratia liquefaciens.